A 72-amino-acid polypeptide reads, in one-letter code: Translation initiation factor IF-1 (72 aa).

The S1-like domain occupies 1–72 (MSKEDVIEVE…TRGRITWRAK (72 aa)).

The protein belongs to the IF-1 family. In terms of assembly, component of the 30S ribosomal translation pre-initiation complex which assembles on the 30S ribosome in the order IF-2 and IF-3, IF-1 and N-formylmethionyl-tRNA(fMet); mRNA recruitment can occur at any time during PIC assembly.

It is found in the cytoplasm. In terms of biological role, one of the essential components for the initiation of protein synthesis. Stabilizes the binding of IF-2 and IF-3 on the 30S subunit to which N-formylmethionyl-tRNA(fMet) subsequently binds. Helps modulate mRNA selection, yielding the 30S pre-initiation complex (PIC). Upon addition of the 50S ribosomal subunit IF-1, IF-2 and IF-3 are released leaving the mature 70S translation initiation complex. The protein is Translation initiation factor IF-1 of Acetivibrio thermocellus (strain ATCC 27405 / DSM 1237 / JCM 9322 / NBRC 103400 / NCIMB 10682 / NRRL B-4536 / VPI 7372) (Clostridium thermocellum).